A 461-amino-acid polypeptide reads, in one-letter code: ERBB receptor feedback inhibitor 1 (461 aa).

Ser-2 is modified (N-acetylserine). Phosphothreonine is present on residues Thr-126 and Thr-130. Residues 228 to 353 are disordered; the sequence is QNRVVPDPNP…VMPPTQSFAP (126 aa). Phosphoserine occurs at positions 251 and 272. Residues 265 to 274 show a composition bias toward polar residues; sequence SSCTHRASPS. Residues 283–292 show a composition bias toward pro residues; it reads PPRVPIPPRP. At Ser-301 the chain carries Phosphoserine. Residues 311–324 are compositionally biased toward basic and acidic residues; the sequence is DEDRPPKVPPREPL. The segment covering 325–336 has biased composition (polar residues); sequence SRSNSRTPSPKS. Positions 333-362 are interaction with EGFR and ERBB2 and regulation of EGFR activation; that stretch reads SPKSLPSYLNGVMPPTQSFAPDPKYVSSKA. The residue at position 460 (Ser-460) is a Phosphoserine.

This sequence belongs to the MIG6 family. As to quaternary structure, interacts with EGFR. Interacts with ERBB2. Detected in lung, in airway epithelial cells and alveolar type 2 cells (at protein level). Detected in uterus stroma, luminal epithelium and glandular epithelium.

It localises to the cytoplasm. It is found in the cell membrane. Its subcellular location is the nucleus. In terms of biological role, negative regulator of EGFR signaling in skin morphogenesis. Acts as a negative regulator for several EGFR family members, including ERBB2, ERBB3 and ERBB4. Inhibits EGFR catalytic activity by interfering with its dimerization. Inhibits autophosphorylation of EGFR, ERBB2 and ERBB4. Important for normal keratinocyte proliferation and differentiation. Plays a role in modulating the response to steroid hormones in the uterus. Required for normal response to progesterone in the uterus and for fertility. Mediates epithelial estrogen responses in the uterus by regulating ESR1 levels and activation. Important for regulation of endometrium cell proliferation. Important for normal prenatal and perinatal lung development. This chain is ERBB receptor feedback inhibitor 1 (Errfi1), found in Mus musculus (Mouse).